The sequence spans 470 residues: E3 SUMO-protein ligase EGR2 (470 aa).

Low complexity predominate over residues 126–141 (PPASTTASSSVTSASP). Disordered stretches follow at residues 126-153 (PPAS…GVCT), 159-178 (PELD…SGCT), and 185-210 (PSAF…SYPS). A compositionally biased stretch (low complexity) spans 190-202 (SPPSTTSTSSLAY). Lys247 is modified (N6-acetyllysine; by EP300). The segment covering 275-291 (GPGAGVTGPGASGGGEG) has biased composition (gly residues). Positions 275 to 345 (GPGAGVTGPG…PYPCPAEGCD (71 aa)) are disordered. 3 consecutive C2H2-type zinc fingers follow at residues 337 to 361 (YPCP…IRIH), 367 to 389 (FQCR…IRTH), and 395 to 417 (FACD…TKIH). Positions 408–470 (DERKRHTKIH…ASCTSRTRTP (63 aa)) are disordered. Over residues 412-422 (RHTKIHLRQKE) the composition is skewed to basic residues. Positions 426–439 (SAPSAPPSAQSSAS) are enriched in low complexity. The segment covering 440–450 (GPGGSQAGGSL) has biased composition (gly residues).

It belongs to the EGR C2H2-type zinc-finger protein family. Interacts with HCFC1. Interacts with WWP2. Interacts with UBC9. Interacts with CITED1. Interacts (via phosphorylated form) with SFN. In terms of processing, ubiquitinated by WWP2 leading to proteasomal degradation. Post-translationally, acetylated at Lys-247. May be deacetylated by HDAC6, HDAC10 or SIRT1. In terms of tissue distribution, expressed mainly in the thymus.

Its subcellular location is the nucleus. It participates in protein modification; protein sumoylation. In terms of biological role, sequence-specific DNA-binding transcription factor. Plays a role in hindbrain segmentation by regulating the expression of a subset of homeobox containing genes and in Schwann cell myelination by regulating the expression of genes involved in the formation and maintenance of myelin. Binds to two EGR2-consensus sites EGR2A (5'-CTGTAGGAG-3') and EGR2B (5'-ATGTAGGTG-3') in the HOXB3 enhancer and promotes HOXB3 transcriptional activation. Binds to specific DNA sites located in the promoter region of HOXA4, HOXB2 and ERBB2. Regulates hindbrain segmentation by controlling the expression of Hox genes, such as HOXA4, HOXB3 and HOXB2, and thereby specifying odd and even rhombomeres. Promotes the expression of HOXB3 in the rhombomere r5 and of HOXB3 in r3 and r5 in the hindbrain. Regulates myelination in the peripheral nervous system after birth, possibly by regulating the expression of myelin proteins, such as MPZ, and by promoting the differentiation of Schwann cells. Involved in the development of the jaw openener musculature, probably by playing a role in its innervation through trigeminal motor neurons. May play a role in adipogenesis, possibly by regulating the expression of CEBPB. E3 SUMO-protein ligase helping SUMO1 conjugation to its coregulators NAB1 and NAB2, whose sumoylation down-regulates EGR2 transcriptional activity. The chain is E3 SUMO-protein ligase EGR2 (Egr2) from Mus musculus (Mouse).